A 177-amino-acid chain; its full sequence is 3-hydroxydecanoyl-[acyl-carrier-protein] dehydratase (177 aa).

The active site involves His-76.

The protein belongs to the thioester dehydratase family. FabA subfamily. As to quaternary structure, homodimer.

The protein localises to the cytoplasm. It carries out the reaction a (3R)-hydroxyacyl-[ACP] = a (2E)-enoyl-[ACP] + H2O. The enzyme catalyses (3R)-hydroxydecanoyl-[ACP] = (2E)-decenoyl-[ACP] + H2O. The catalysed reaction is (2E)-decenoyl-[ACP] = (3Z)-decenoyl-[ACP]. Its pathway is lipid metabolism; fatty acid biosynthesis. Necessary for the introduction of cis unsaturation into fatty acids. Catalyzes the dehydration of (3R)-3-hydroxydecanoyl-ACP to E-(2)-decenoyl-ACP and then its isomerization to Z-(3)-decenoyl-ACP. Can catalyze the dehydratase reaction for beta-hydroxyacyl-ACPs with saturated chain lengths up to 16:0, being most active on intermediate chain length. This is 3-hydroxydecanoyl-[acyl-carrier-protein] dehydratase from Haemophilus influenzae (strain PittGG).